Here is a 252-residue protein sequence, read N- to C-terminus: Trans-aconitate 2-methyltransferase (252 aa).

It belongs to the methyltransferase superfamily. Tam family.

Its subcellular location is the cytoplasm. The enzyme catalyses trans-aconitate + S-adenosyl-L-methionine = (E)-3-(methoxycarbonyl)pent-2-enedioate + S-adenosyl-L-homocysteine. Catalyzes the S-adenosylmethionine monomethyl esterification of trans-aconitate. In Escherichia coli (strain UTI89 / UPEC), this protein is Trans-aconitate 2-methyltransferase.